Reading from the N-terminus, the 1277-residue chain is Protein FAM83H (1277 aa).

A compositionally biased stretch (polar residues) spans 1 to 12; it reads MARRSQSSSQGE. 8 disordered regions span residues 1-20, 67-98, 717-756, 772-805, 971-1018, 1070-1130, 1158-1225, and 1247-1266; these read MARR…PNYL, SLQR…SGTY, FGST…TNPL, SKLE…TGRT, EQTS…NSAF, KAEE…SRLS, QKNR…RDIL, and KKDE…AGKI. Residues 724–750 show a composition bias toward basic and acidic residues; the sequence is SVEKAKENPPAEKEKEEGLLSRHDSFR. 4 stretches are compositionally biased toward polar residues: residues 777–805, 971–982, 993–1015, and 1112–1130; these read HTST…TGRT, EQTSSTIQTIGN, SGPT…TRPN, and KSLS…SRLS. The span at 1204 to 1215 shows a compositional bias: low complexity; it reads SFLSRSRFSRPS. A compositionally biased stretch (basic and acidic residues) spans 1247–1263; sequence KKDEQPSHADDNDDKKA.

It belongs to the FAM83 family.

It localises to the cytoplasm. It is found in the cytoskeleton. May play a role in keratin cytoskeleton disassembly. The protein is Protein FAM83H of Xenopus tropicalis (Western clawed frog).